A 547-amino-acid chain; its full sequence is Chaperonin GroEL (547 aa).

ATP is bound by residues Thr-30–Pro-33, Lys-51, Asp-87–Thr-91, Gly-415, Asn-480–Ala-482, and Asp-496.

This sequence belongs to the chaperonin (HSP60) family. Forms a cylinder of 14 subunits composed of two heptameric rings stacked back-to-back. Interacts with the co-chaperonin GroES.

The protein localises to the cytoplasm. It catalyses the reaction ATP + H2O + a folded polypeptide = ADP + phosphate + an unfolded polypeptide.. Together with its co-chaperonin GroES, plays an essential role in assisting protein folding. The GroEL-GroES system forms a nano-cage that allows encapsulation of the non-native substrate proteins and provides a physical environment optimized to promote and accelerate protein folding. The protein is Chaperonin GroEL of Glaesserella parasuis serovar 5 (strain SH0165) (Haemophilus parasuis).